The chain runs to 190 residues: MASRGKTETSKLKQNLEEQLDRLMQQLQDLEECREELDGDEYEETKKETLEQLSEFNDSLKKIMSGNMTLVDELSGMQLAIQAAISQAFKTPEVIRLFAKKQPGQLRTRLAEMDRDLMVGKLERDLHTQQKVEILTALRKLGEKLTDDDEAFLSANAGAVLSQFEKVSTELGSGDKVLALAGFEVEKAKK.

The stretch at 2–63 (ASRGKTETSK…SEFNDSLKKI (62 aa)) forms a coiled coil.

Belongs to the CTNNBIP1 family. Does not interact with CTNNB1.

The protein is Protein LZIC (Lzic) of Rattus norvegicus (Rat).